A 315-amino-acid chain; its full sequence is Protein-methionine-sulfoxide reductase catalytic subunit MsrP (315 aa).

A signal peptide (tat-type signal) is located at residues 1 to 45 (MPSYRPPKIASSEITPRQVYLRRREFLGAATLGAMALYGAGKASA). Mo-molybdopterin is bound by residues Asn-71, 74-75 (YE), Cys-129, Thr-164, Asn-214, Arg-219, and 230-232 (GIK).

This sequence belongs to the MsrP family. As to quaternary structure, heterodimer of a catalytic subunit (MsrP) and a heme-binding subunit (MsrQ). It depends on Mo-molybdopterin as a cofactor. In terms of processing, predicted to be exported by the Tat system. The position of the signal peptide cleavage has not been experimentally proven.

The protein localises to the periplasm. It catalyses the reaction L-methionyl-[protein] + a quinone + H2O = L-methionyl-(S)-S-oxide-[protein] + a quinol. The enzyme catalyses L-methionyl-[protein] + a quinone + H2O = L-methionyl-(R)-S-oxide-[protein] + a quinol. Part of the MsrPQ system that repairs oxidized periplasmic proteins containing methionine sulfoxide residues (Met-O), using respiratory chain electrons. Thus protects these proteins from oxidative-stress damage caused by reactive species of oxygen and chlorine generated by the host defense mechanisms. MsrPQ is essential for the maintenance of envelope integrity under bleach stress, rescuing a wide series of structurally unrelated periplasmic proteins from methionine oxidation. The catalytic subunit MsrP is non-stereospecific, being able to reduce both (R-) and (S-) diastereoisomers of methionine sulfoxide. In Rhizobium etli (strain ATCC 51251 / DSM 11541 / JCM 21823 / NBRC 15573 / CFN 42), this protein is Protein-methionine-sulfoxide reductase catalytic subunit MsrP.